The primary structure comprises 159 residues: Ribosomal RNA large subunit methyltransferase H (159 aa).

S-adenosyl-L-methionine-binding positions include Leu-76, Gly-107, and 126 to 131 (LSSLTL).

Belongs to the RNA methyltransferase RlmH family. Homodimer.

The protein resides in the cytoplasm. It catalyses the reaction pseudouridine(1915) in 23S rRNA + S-adenosyl-L-methionine = N(3)-methylpseudouridine(1915) in 23S rRNA + S-adenosyl-L-homocysteine + H(+). In terms of biological role, specifically methylates the pseudouridine at position 1915 (m3Psi1915) in 23S rRNA. This chain is Ribosomal RNA large subunit methyltransferase H, found in Cupriavidus pinatubonensis (strain JMP 134 / LMG 1197) (Cupriavidus necator (strain JMP 134)).